Reading from the N-terminus, the 222-residue chain is Pyrrolidone-carboxylate peptidase (222 aa).

Residues Glu80, Cys146, and His170 contribute to the active site.

This sequence belongs to the peptidase C15 family. Homotetramer.

It is found in the cytoplasm. It catalyses the reaction Release of an N-terminal pyroglutamyl group from a polypeptide, the second amino acid generally not being Pro.. Removes 5-oxoproline from various penultimate amino acid residues except L-proline. The chain is Pyrrolidone-carboxylate peptidase from Mycobacterium tuberculosis (strain ATCC 25177 / H37Ra).